The following is a 55-amino-acid chain: Large ribosomal subunit protein bL33 (55 aa).

Belongs to the bacterial ribosomal protein bL33 family.

The protein is Large ribosomal subunit protein bL33 of Deinococcus geothermalis (strain DSM 11300 / CIP 105573 / AG-3a).